A 535-amino-acid chain; its full sequence is T-complex protein 1 subunit epsilon (535 aa).

Belongs to the TCP-1 chaperonin family. As to quaternary structure, heterooligomeric complex of about 850 to 900 kDa that forms two stacked rings, 12 to 16 nm in diameter.

It is found in the cytoplasm. Molecular chaperone; assists the folding of proteins upon ATP hydrolysis. Known to play a role, in vitro, in the folding of actin and tubulin. This chain is T-complex protein 1 subunit epsilon, found in Avena sativa (Oat).